Consider the following 202-residue polypeptide: Proteasome subunit beta 1 (202 aa).

Residue Met-1 is a propeptide, removed in mature form; by autocatalysis. The active-site Nucleophile is the Thr-2.

This sequence belongs to the peptidase T1B family. In terms of assembly, the 20S proteasome core is composed of 14 alpha and 14 beta subunits that assemble into four stacked heptameric rings, resulting in a barrel-shaped structure. The two inner rings, each composed of seven catalytic beta subunits, are sandwiched by two outer rings, each composed of seven alpha subunits. The catalytic chamber with the active sites is on the inside of the barrel. Has a gated structure, the ends of the cylinder being occluded by the N-termini of the alpha-subunits. Is capped at one or both ends by the proteasome regulatory ATPase, PAN.

Its subcellular location is the cytoplasm. It carries out the reaction Cleavage of peptide bonds with very broad specificity.. Its activity is regulated as follows. The formation of the proteasomal ATPase PAN-20S proteasome complex, via the docking of the C-termini of PAN into the intersubunit pockets in the alpha-rings, triggers opening of the gate for substrate entry. Interconversion between the open-gate and close-gate conformations leads to a dynamic regulation of the 20S proteasome proteolysis activity. Component of the proteasome core, a large protease complex with broad specificity involved in protein degradation. In Pyrobaculum arsenaticum (strain DSM 13514 / JCM 11321 / PZ6), this protein is Proteasome subunit beta 1.